The chain runs to 162 residues: CASP-like protein 1C1 (162 aa).

The Cytoplasmic segment spans residues 1-7 (MAKLHRL). Residues 8-28 (ISAVLRLAAAGAAAAAAIIMV) form a helical membrane-spanning segment. The Extracellular portion of the chain corresponds to 29–50 (TSHETTSFFGIEMEAKYSYTPS). The chain crosses the membrane as a helical span at residues 51-71 (FVFFVVAFAVAFAYSLLALLA). Residues 72–79 (RPGSTASR) are Cytoplasmic-facing. A helical membrane pass occupies residues 80-100 (LLLLSDVMVGMLLTGAVAATG). The Extracellular portion of the chain corresponds to 101–128 (AISQVGKSGNEHAGWLPICAQVQAYCSH). The helical transmembrane segment at 129–149 (VMGALIAGFVSLLLYFLIIMY) threads the bilayer. Residues 150–162 (SLHAVAEPLCSCH) lie on the Cytoplasmic side of the membrane.

Belongs to the Casparian strip membrane proteins (CASP) family. Homodimer and heterodimers.

Its subcellular location is the cell membrane. The protein is CASP-like protein 1C1 of Sorghum bicolor (Sorghum).